The chain runs to 312 residues: Olfactory receptor-like protein COR5 (312 aa).

The Extracellular segment spans residues 1–26 (MALGNCTTPTTFILSGLTDNPRLQMP). N-linked (GlcNAc...) asparagine glycosylation occurs at N5. The helical transmembrane segment at 27–49 (LFMVFLAIYTITLLANLGLIALI) threads the bilayer. Residues 50 to 57 (SVDFHLQT) are Cytoplasmic-facing. Residues 58–79 (PMYIFLQNLSFTDAAYSTVITP) form a helical membrane-spanning segment. Residues 80-100 (KMLATFLEERRTISYVGCILQ) are Extracellular-facing. A disulfide bond links C97 and C179. A helical transmembrane segment spans residues 101 to 120 (YFSFVLLTSSECLLLAVMAY). Topologically, residues 121–139 (DRYVAICKPLLYPAIMTKA) are cytoplasmic. The chain crosses the membrane as a helical span at residues 140-164 (VCWRLVEGLYSLAFLNSLVHTSGLL). The Extracellular portion of the chain corresponds to 165-205 (KLSFCSSNVVNHFFCDNSPLFQISSSSTTLNELLVFIFGSW). Residues 206 to 226 (FAMSSIITTPISYVFIILTVV) form a helical membrane-spanning segment. Residues 227–239 (RIRSKDGKYKAFS) lie on the Cytoplasmic side of the membrane. Residues 240 to 260 (TCTSHLMAVSLFHGTVIFMYL) traverse the membrane as a helical segment. The Extracellular segment spans residues 261–271 (RPVKLFSLDTD). The chain crosses the membrane as a helical span at residues 272–292 (KIASLFYTVVIPMLNPLIYSW). Residues 293–312 (RNKEVKDALRRVIATNVWIH) are Cytoplasmic-facing.

The protein belongs to the G-protein coupled receptor 1 family.

Its subcellular location is the cell membrane. Odorant receptor. This Gallus gallus (Chicken) protein is Olfactory receptor-like protein COR5 (COR5).